Here is a 133-residue protein sequence, read N- to C-terminus: MEPISHLVKSSLPNYLSSLPVPDSIGGWFKLSFKDWLALIPPTVVVAGLGYTAYLAYCPAARASCAAKNSGRCNNHIRKNEPKVVDMIDVEDIAEKAAFCRCWKTKNWPYCDGSHGEHNKQTGDNVGPIVIKK.

Over 1–35 (MEPISHLVKSSLPNYLSSLPVPDSIGGWFKLSFKD) the chain is Lumenal. A helical membrane pass occupies residues 36 to 58 (WLALIPPTVVVAGLGYTAYLAYC). Topologically, residues 59 to 133 (PAARASCAAK…DNVGPIVIKK (75 aa)) are cytoplasmic. [2Fe-2S] cluster contacts are provided by Cys100, Cys102, Cys111, and His115.

It belongs to the CISD protein family. CISD2 subfamily. [2Fe-2S] cluster is required as a cofactor.

The protein resides in the endoplasmic reticulum membrane. This Drosophila melanogaster (Fruit fly) protein is CDGSH iron-sulfur domain protein.